The chain runs to 2206 residues: Genome polyprotein (2206 aa).

The N-myristoyl glycine; by host moiety is linked to residue G2. Topologically, residues 2-1517 (GAQVSSQKVG…NINRAMTILQ (1516 aa)) are cytoplasmic. Amphipathic alpha-helix regions lie at residues 579 to 599 (GVDDLITEVAQNALALSLPKP) and 579 to 603 (GVDDLITEVAQNALALSLPKPQSNL). Catalysis depends on for protease 2A activity residues H898 and D916. Zn(2+) contacts are provided by C933 and C935. C987 functions as the For protease 2A activity in the catalytic mechanism. Residues C993 and H995 each contribute to the Zn(2+) site. Residues 1125 to 1197 (GDSWLKKFTE…HQSCPSQEHQ (73 aa)) form a membrane-binding region. Residues 1125 to 1263 (GDSWLKKFTE…SPGTGKSVAT (139 aa)) are oligomerization. An RNA-binding region spans residues 1146-1150 (SNKIS). The 157-residue stretch at 1229–1385 (EHTINNYIQF…SEYSRDGKLN (157 aa)) folds into the SF3 helicase domain. 1253 to 1260 (GSPGTGKS) contributes to the ATP binding site. Zn(2+)-binding residues include C1393, C1396, C1405, and C1410. The C4-type zinc-finger motif lies at 1393–1410 (CKNCHQPANFKRCCPLVC). The tract at residues 1437-1444 (EKNRRSNI) is RNA-binding. Positions 1448–1453 (MEALFQ) are oligomerization. An intramembrane segment occupies 1518 to 1533 (AVTTFAAVAGVVYVMY). Over 1534–2206 (KLFAGHQGAY…TLYRRWLDSF (673 aa)) the chain is Cytoplasmic. O-(5'-phospho-RNA)-tyrosine is present on Y1543. The Peptidase C3 domain maps to 1563 to 1741 (GPGFDYAVAM…FAAALKRSYF (179 aa)). Active-site for protease 3C activity residues include H1602, E1633, and C1709. The RdRp catalytic domain occupies 1972–2087 (EKLFAFDYTG…SYPHEVDASL (116 aa)). Mg(2+) contacts are provided by D1978 and D2073.

Belongs to the picornaviruses polyprotein family. As to quaternary structure, interacts with capsid protein VP1 and capsid protein VP3 to form heterotrimeric protomers. In terms of assembly, interacts with capsid protein VP0, and capsid protein VP3 to form heterotrimeric protomers. Interacts with human PVR. Five protomers subsequently associate to form pentamers which serve as building blocks for the capsid. Interacts with capsid protein VP2, capsid protein VP3 and capsid protein VP4 following cleavage of capsid protein VP0. Interacts with capsid protein VP1 and capsid protein VP3 in the mature capsid. As to quaternary structure, interacts with capsid protein VP0 and capsid protein VP1 to form heterotrimeric protomers. Five protomers subsequently associate to form pentamers which serve as building blocks for the capsid. Interacts with capsid protein VP4 in the mature capsid. Interacts with protein 2C; this interaction may be important for virion morphogenesis. In terms of assembly, interacts with capsid protein VP1 and capsid protein VP3. Homodimer. As to quaternary structure, homohexamer; forms a hexameric ring structure with 6-fold symmetry characteristic of AAA+ ATPases. Interacts (via N-terminus) with host RTN3 (via reticulon domain); this interaction is important for viral replication. Interacts with capsid protein VP3; this interaction may be important for virion morphogenesis. In terms of assembly, interacts with protein 3CD. Homodimer. Interacts with host GBF1. Interacts (via GOLD domain) with host ACBD3 (via GOLD domain); this interaction allows the formation of a viral protein 3A/ACBD3 heterotetramer with a 2:2 stoichiometry, which will stimulate the recruitment of host PI4KB in order to synthesize PI4P at the viral RNA replication sites. As to quaternary structure, interacts with RNA-directed RNA polymerase. In terms of assembly, interacts with protein 3AB and with RNA-directed RNA polymerase. Interacts with Viral protein genome-linked and with protein 3CD. It depends on Mg(2+) as a cofactor. Specific enzymatic cleavages in vivo by the viral proteases yield processing intermediates and the mature proteins. Post-translationally, myristoylation is required for the formation of pentamers during virus assembly. Further assembly of 12 pentamers and a molecule of genomic RNA generates the provirion. In terms of processing, during virion maturation, immature virions are rendered infectious following cleavage of VP0 into VP4 and VP2. This maturation seems to be an autocatalytic event triggered by the presence of RNA in the capsid and it is followed by a conformational change infectious virion. Myristoylation is required during RNA encapsidation and formation of the mature virus particle. Post-translationally, VPg is uridylylated by the polymerase into VPg-pUpU. This acts as a nucleotide-peptide primer for the genomic RNA replication.

It localises to the virion. The protein resides in the host cytoplasm. It is found in the host cytoplasmic vesicle membrane. Its subcellular location is the host nucleus. The catalysed reaction is a ribonucleoside 5'-triphosphate + H2O = a ribonucleoside 5'-diphosphate + phosphate + H(+). It catalyses the reaction Selective cleavage of Tyr-|-Gly bond in the picornavirus polyprotein.. The enzyme catalyses RNA(n) + a ribonucleoside 5'-triphosphate = RNA(n+1) + diphosphate. It carries out the reaction Selective cleavage of Gln-|-Gly bond in the poliovirus polyprotein. In other picornavirus reactions Glu may be substituted for Gln, and Ser or Thr for Gly.. With respect to regulation, replication or transcription is subject to high level of random mutations by the nucleotide analog ribavirin. In terms of biological role, forms an icosahedral capsid of pseudo T=3 symmetry with capsid proteins VP2 and VP3. The capsid is 300 Angstroms in diameter, composed of 60 copies of each capsid protein and enclosing the viral positive strand RNA genome. Capsid protein VP1 mainly forms the vertices of the capsid. Capsid protein VP1 interacts with host cell receptor PVR to provide virion attachment to target host cells. This attachment induces virion internalization predominantly through clathrin- and caveolin-independent endocytosis in Hela cells and through caveolin-mediated endocytosis in brain microvascular endothelial cells. Tyrosine kinases are probably involved in the entry process. Virus binding to PVR induces increased junctional permeability and rearrangement of junctional proteins. Modulation of endothelial tight junctions, as well as cytolytic infection of endothelial cells themselves, may result in loss of endothelial integrity which may help the virus to reach the CNS. After binding to its receptor, the capsid undergoes conformational changes. Capsid protein VP1 N-terminus (that contains an amphipathic alpha-helix) and capsid protein VP4 are externalized. Together, they shape a pore in the host membrane through which viral genome is translocated to host cell cytoplasm. Forms an icosahedral capsid of pseudo T=3 symmetry with capsid proteins VP2 and VP3. The capsid is 300 Angstroms in diameter, composed of 60 copies of each capsid protein and enclosing the viral positive strand RNA genome. Its function is as follows. Lies on the inner surface of the capsid shell. After binding to the host receptor, the capsid undergoes conformational changes. Capsid protein VP4 is released, Capsid protein VP1 N-terminus is externalized, and together, they shape a pore in the host membrane through which the viral genome is translocated into the host cell cytoplasm. Functionally, component of immature procapsids, which is cleaved into capsid proteins VP4 and VP2 after maturation. Allows the capsid to remain inactive before the maturation step. In terms of biological role, cysteine protease that cleaves viral polyprotein and specific host proteins. It is responsible for the autocatalytic cleavage between the P1 and P2 regions, which is the first cleavage occurring in the polyprotein. Also cleaves the host translation initiation factor EIF4G1, in order to shut down the capped cellular mRNA translation. Inhibits the host nucleus-cytoplasm protein and RNA trafficking by cleaving host members of the nuclear pores including NUP98, NUP62 and NUP153. Counteracts stress granule formation probably by antagonizing its assembly or promoting its dissassembly. Cleaves and inhibits host IFIH1/MDA5, thereby inhibiting the type-I IFN production and the establishment of the antiviral state. Cleaves and inhibits host MAVS, thereby inhibiting the type-I IFN production and the establishment of the antiviral state. Plays an essential role in the virus replication cycle by acting as a viroporin. Creates a pore in the host endoplasmic reticulum and as a consequence releases Ca2+ in the cytoplasm of infected cell. In turn, high levels of cytoplasmic calcium may trigger membrane trafficking and transport of viral ER-associated proteins to viroplasms, sites of viral genome replication. Its function is as follows. Induces and associates with structural rearrangements of intracellular membranes. Displays RNA-binding, nucleotide binding and NTPase activities. May play a role in virion morphogenesis and viral RNA encapsidation by interacting with the capsid protein VP3. Functionally, localizes the viral replication complex to the surface of membranous vesicles. Together with protein 3CD binds the Cis-Active RNA Element (CRE) which is involved in RNA synthesis initiation. Acts as a cofactor to stimulate the activity of 3D polymerase, maybe through a nucleid acid chaperone activity. In terms of biological role, localizes the viral replication complex to the surface of membranous vesicles. It inhibits host cell endoplasmic reticulum-to-Golgi apparatus transport and causes the disassembly of the Golgi complex, possibly through GBF1 interaction. This would result in depletion of MHC, trail receptors and IFN receptors at the host cell surface. Plays an essential role in viral RNA replication by recruiting ACBD3 and PI4KB at the viral replication sites, thereby allowing the formation of the rearranged membranous structures where viral replication takes place. Acts as a primer for viral RNA replication and remains covalently bound to viral genomic RNA. VPg is uridylylated prior to priming replication into VPg-pUpU. The oriI viral genomic sequence may act as a template for this. The VPg-pUpU is then used as primer on the genomic RNA poly(A) by the RNA-dependent RNA polymerase to replicate the viral genome. During genome replication, the VPg-RNA linkage is removed by the host TDP2, thereby accelerating replication. During the late stage of the replication cycle, host TDP2 is excluded from sites of viral RNA synthesis and encapsidation, allowing for the generation of progeny virions. Its function is as follows. Involved in the viral replication complex and viral polypeptide maturation. It exhibits protease activity with a specificity and catalytic efficiency that is different from protease 3C. Protein 3CD lacks polymerase activity. Protein 3CD binds to the 5'UTR of the viral genome. Functionally, major viral protease that mediates proteolytic processing of the polyprotein. Cleaves host EIF5B, contributing to host translation shutoff. Also cleaves host PABPC1, contributing to host translation shutoff. Cleaves host RIGI and thus contributes to the inhibition of type I interferon production. Cleaves host NLRP1, triggers host N-glycine-mediated degradation of the autoinhibitory NLRP1 N-terminal fragment. Inhibits the integrated stress response (ISR) in the infected cell by cleaving host G3BP1. Stress granule formation is thus inhibited, which allows protein synthesis and viral replication. In terms of biological role, replicates the viral genomic RNA on the surface of intracellular membranes. May form linear arrays of subunits that propagate along a strong head-to-tail interaction called interface-I. Covalently attaches UMP to a tyrosine of VPg, which is used to prime RNA synthesis. The positive stranded RNA genome is first replicated at virus induced membranous vesicles, creating a dsRNA genomic replication form. This dsRNA is then used as template to synthesize positive stranded RNA genomes. ss(+)RNA genomes are either translated, replicated or encapsidated. The polypeptide is Genome polyprotein (Poliovirus type 3 (strain 23127)).